The following is a 349-amino-acid chain: Phosphoribosylformylglycinamidine cyclo-ligase (349 aa).

This sequence belongs to the AIR synthase family.

It localises to the cytoplasm. It carries out the reaction 2-formamido-N(1)-(5-O-phospho-beta-D-ribosyl)acetamidine + ATP = 5-amino-1-(5-phospho-beta-D-ribosyl)imidazole + ADP + phosphate + H(+). The protein operates within purine metabolism; IMP biosynthesis via de novo pathway; 5-amino-1-(5-phospho-D-ribosyl)imidazole from N(2)-formyl-N(1)-(5-phospho-D-ribosyl)glycinamide: step 2/2. This chain is Phosphoribosylformylglycinamidine cyclo-ligase, found in Bordetella avium (strain 197N).